Reading from the N-terminus, the 412-residue chain is Na(+)-translocating NADH-quinone reductase subunit B (412 aa).

3 helical membrane passes run 57 to 77 (MILV…NVGL), 127 to 147 (VFFL…EVLF), and 163 to 183 (SILF…ALGI). T236 carries the FMN phosphoryl threonine modification. 5 helical membrane passes run 270–290 (GSIG…ILFG), 297–317 (IVAG…VIGS), 322–342 (MFAM…GMMF), 358–378 (WSYG…NPAY), and 381–401 (GMML…YLVV).

This sequence belongs to the NqrB/RnfD family. In terms of assembly, composed of six subunits; NqrA, NqrB, NqrC, NqrD, NqrE and NqrF. The cofactor is FMN.

It is found in the cell inner membrane. The enzyme catalyses a ubiquinone + n Na(+)(in) + NADH + H(+) = a ubiquinol + n Na(+)(out) + NAD(+). In terms of biological role, NQR complex catalyzes the reduction of ubiquinone-1 to ubiquinol by two successive reactions, coupled with the transport of Na(+) ions from the cytoplasm to the periplasm. NqrA to NqrE are probably involved in the second step, the conversion of ubisemiquinone to ubiquinol. In Klebsiella pneumoniae subsp. pneumoniae (strain ATCC 700721 / MGH 78578), this protein is Na(+)-translocating NADH-quinone reductase subunit B.